The primary structure comprises 436 residues: APO protein 1, chloroplastic (436 aa).

The transit peptide at M1 to R47 directs the protein to the chloroplast. APO domains are found at residues A155–E240 and A329–Q414.

This sequence belongs to the APO family. As to expression, expressed at low level. Expressed at higher level in leaves. Expressed at lower level in roots, stems, siliques and flowers.

It localises to the plastid. The protein resides in the chloroplast. Involved in the stable assembly of several 4Fe-4S cluster-containing complexes of chloroplasts. May participate in 4Fe-4S cofactor incorporation into psaA and/or psaB during translation. This Arabidopsis thaliana (Mouse-ear cress) protein is APO protein 1, chloroplastic (APO1).